The sequence spans 433 residues: Tol-Pal system protein TolB (433 aa).

Residues 1-21 form the signal peptide; the sequence is MRNLLRGMLVVICCMAGIAAA.

The protein belongs to the TolB family. As to quaternary structure, the Tol-Pal system is composed of five core proteins: the inner membrane proteins TolA, TolQ and TolR, the periplasmic protein TolB and the outer membrane protein Pal. They form a network linking the inner and outer membranes and the peptidoglycan layer.

It is found in the periplasm. Part of the Tol-Pal system, which plays a role in outer membrane invagination during cell division and is important for maintaining outer membrane integrity. The sequence is that of Tol-Pal system protein TolB from Pseudomonas fluorescens (strain ATCC BAA-477 / NRRL B-23932 / Pf-5).